The chain runs to 353 residues: (3aS,4S,5R,7aS)-5-hydroxy-7a-methyl-1-oxo-octahydro-1H-indene-4-carboxyl-CoA dehydrogenase (353 aa).

Residues 22-24 (GMG), 171-173 (AGG), and 194-195 (GT) contribute to the FMN site.

This sequence belongs to the nitronate monooxygenase family.

The enzyme catalyses (3aS,4S,5R,7aS)-5-hydroxy-7a-methyl-1-oxo-octahydro-1H-indene-4-carboxyl-CoA + NAD(+) = (5R,7aS)-5-hydroxy-7a-methyl-1-oxo-2,3,5,6,7,7a-hexahydro-1H-indene-carboxyl-CoA + NADH + H(+). It functions in the pathway steroid metabolism; cholesterol degradation. Involved in the final steps of cholesterol and steroid degradation. Probably catalyzes the introduction of a double bound into the C ring of 5OH-HIC-CoA, leading to the formation of (5R,7aS)-5-hydroxy-7a-methyl-1-oxo-3,5,6,7-tetrahydro-2H-indene-4-carboxyl-CoA. The sequence is that of (3aS,4S,5R,7aS)-5-hydroxy-7a-methyl-1-oxo-octahydro-1H-indene-4-carboxyl-CoA dehydrogenase from Rhodococcus jostii (strain RHA1).